The sequence spans 557 residues: Proline--tRNA ligase (557 aa).

The protein belongs to the class-II aminoacyl-tRNA synthetase family. ProS type 1 subfamily. Homodimer.

The protein resides in the cytoplasm. The enzyme catalyses tRNA(Pro) + L-proline + ATP = L-prolyl-tRNA(Pro) + AMP + diphosphate. Functionally, catalyzes the attachment of proline to tRNA(Pro) in a two-step reaction: proline is first activated by ATP to form Pro-AMP and then transferred to the acceptor end of tRNA(Pro). As ProRS can inadvertently accommodate and process non-cognate amino acids such as alanine and cysteine, to avoid such errors it has two additional distinct editing activities against alanine. One activity is designated as 'pretransfer' editing and involves the tRNA(Pro)-independent hydrolysis of activated Ala-AMP. The other activity is designated 'posttransfer' editing and involves deacylation of mischarged Ala-tRNA(Pro). The misacylated Cys-tRNA(Pro) is not edited by ProRS. This chain is Proline--tRNA ligase, found in Baumannia cicadellinicola subsp. Homalodisca coagulata.